Reading from the N-terminus, the 197-residue chain is TLE family member 5 (197 aa).

Residues 166–197 form a CCN domain region; that stretch reads LSALGSQTHLSKEDKNGHDGDTHQEDDGEKSD. Residues 170–197 are disordered; it reads GSQTHLSKEDKNGHDGDTHQEDDGEKSD. Residues 175–197 are compositionally biased toward basic and acidic residues; that stretch reads LSKEDKNGHDGDTHQEDDGEKSD. The residue at position 196 (serine 196) is a Phosphoserine.

It belongs to the WD repeat Groucho/TLE family. As to quaternary structure, homooligomer and heterooligomer with other family members. Binds TCF7 and the NF-kappa-B subunit RELA. Interacts with PHF12. Interacts (via Q domain) with SIX3. Interacts with SIX6. In terms of processing, ubiquitinated by XIAP/BIRC4. In terms of tissue distribution, ubiquitously expressed in developing embryos by midgestation, a wide expression is conserved in adult. In mouse, abundantly expressed in muscle, heart and brain.

The protein resides in the nucleus. In terms of biological role, transcriptional corepressor. Acts as a dominant repressor towards other family members. Inhibits NF-kappa-B-regulated gene expression. May be required for the initiation and maintenance of the differentiated state. Essential for the transcriptional repressor activity of SIX3 during retina and lens development. This Mus musculus (Mouse) protein is TLE family member 5.